Here is a 375-residue protein sequence, read N- to C-terminus: Chaperone protein DnaJ (375 aa).

The 66-residue stretch at 5–70 (DYYEILGVSK…QKRAAYDQYG (66 aa)) folds into the J domain. The segment at 130 to 208 (GVTKEIRIPT…CHGHGRVEKS (79 aa)) adopts a CR-type zinc-finger fold. 8 residues coordinate Zn(2+): C143, C146, C160, C163, C182, C185, C196, and C199. CXXCXGXG motif repeat units follow at residues 143 to 150 (CDVCHGSG), 160 to 167 (CPTCHGSG), 182 to 189 (CPHCQGRG), and 196 to 203 (CHKCHGHG).

Belongs to the DnaJ family. As to quaternary structure, homodimer. Zn(2+) serves as cofactor.

The protein resides in the cytoplasm. Its function is as follows. Participates actively in the response to hyperosmotic and heat shock by preventing the aggregation of stress-denatured proteins and by disaggregating proteins, also in an autonomous, DnaK-independent fashion. Unfolded proteins bind initially to DnaJ; upon interaction with the DnaJ-bound protein, DnaK hydrolyzes its bound ATP, resulting in the formation of a stable complex. GrpE releases ADP from DnaK; ATP binding to DnaK triggers the release of the substrate protein, thus completing the reaction cycle. Several rounds of ATP-dependent interactions between DnaJ, DnaK and GrpE are required for fully efficient folding. Also involved, together with DnaK and GrpE, in the DNA replication of plasmids through activation of initiation proteins. The polypeptide is Chaperone protein DnaJ (Salmonella paratyphi A (strain ATCC 9150 / SARB42)).